We begin with the raw amino-acid sequence, 494 residues long: GDP-fucose protein O-fucosyltransferase 4 (494 aa).

Residues 1 to 7 are Cytoplasmic-facing; that stretch reads MAARYTE. A helical; Signal-anchor for type II membrane protein transmembrane segment spans residues 8–24; the sequence is AVLAALGVLSVCSASSS. Over 25–494 the chain is Lumenal; sequence SGSGASGKAG…EIFMKRNKNL (470 aa). N-linked (GlcNAc...) asparagine glycosylation is present at Asn-167. Cys-390 and Cys-393 are joined by a disulfide.

The protein belongs to the glycosyltransferase 10 family.

Its subcellular location is the endoplasmic reticulum membrane. The catalysed reaction is L-threonyl-[protein] + GDP-beta-L-fucose = 3-O-(alpha-L-fucosyl)-L-threonyl-[protein] + GDP + H(+). It carries out the reaction L-seryl-[protein] + GDP-beta-L-fucose = 3-O-(alpha-L-fucosyl)-L-seryl-[protein] + GDP + H(+). Its pathway is protein modification; protein glycosylation. Functionally, protein O-fucosyltransferase that specifically catalyzes O-fucosylation of serine or threonine residues in EMI domains of target proteins, such as MMRN1, MMRN2 and EMID1. Attaches fucose through an O-glycosidic linkage. O-fucosylation of EMI domain-containing proteins may be required for facilitating protein folding and secretion. Also shows minor alpha-(1,3)-fucosyltransferase activity toward activity toward biantennary N-glycan acceptors. However, this was tested with a library of synthetic substrates and this activity is unsure in vivo. In Rattus norvegicus (Rat), this protein is GDP-fucose protein O-fucosyltransferase 4 (Fut11).